A 274-amino-acid polypeptide reads, in one-letter code: Probable glycerophosphodiester phosphodiesterase 1 (274 aa).

Residues 12-264 (PFVVAHRGAS…HHPGRTKAWL (253 aa)) enclose the GP-PDE domain. Catalysis depends on histidine 17, which acts as the Proton acceptor. Positions 44 and 46 each coordinate Ca(2+). Histidine 59 serves as the catalytic Proton donor. Glutamate 126 is a Ca(2+) binding site.

This sequence belongs to the glycerophosphoryl diester phosphodiesterase family. The cofactor is Ca(2+).

It catalyses the reaction a sn-glycero-3-phosphodiester + H2O = an alcohol + sn-glycerol 3-phosphate + H(+). In terms of biological role, glycerophosphodiester phosphodiesterase hydrolyzes glycerophosphodiesters into glycerol-3-phosphate (G3P) and the corresponding alcohol. The polypeptide is Probable glycerophosphodiester phosphodiesterase 1 (glpQ1) (Mycobacterium tuberculosis (strain CDC 1551 / Oshkosh)).